A 146-amino-acid polypeptide reads, in one-letter code: MAFWTEKTLAEMTPTEWESLCDGCGKCCLNKLIDDETEELYYTNASCHLLNLETCSCKRYPERFEYVPECTAITVENIASLTWLPDSCAYRRLYLGRTLPSWHPLLTGSKDAMHKAGISVKDKIISEIKVRNIEEHIVLWPLKDID.

It belongs to the UPF0260 family.

The sequence is that of UPF0260 protein Sden_1632 from Shewanella denitrificans (strain OS217 / ATCC BAA-1090 / DSM 15013).